A 725-amino-acid chain; its full sequence is Rab-like protein 6 (725 aa).

At Met-1 the chain carries N-acetylmethionine. The segment at 39–279 is small GTPase-like; the sequence is GVQYNMKIVI…IFLEMMEARS (241 aa). GTP is bound by residues 50–57, 100–104, and 177–179; these read GDRNTGKT, DVVDK, and YRD. 2 disordered regions span residues 281–364 and 378–725; these read GHAS…PAPA and PAAE…YEEL. Low complexity-rich tracts occupy residues 291–325 and 343–353; these read QSPS…QLSL and AMPSSVHSSAP. The span at 410-427 shows a compositional bias: basic and acidic residues; sequence GLDRSFLEDTSVPKDKKV. Phosphoserine occurs at positions 414, 436, 438, 480, 482, 483, and 502. Over residues 499–514 the composition is skewed to polar residues; the sequence is QQCSEPETKWSSTKVS. A compositionally biased stretch (basic and acidic residues) spans 537–549; sequence DSERPQEGKDKQV. Over residues 569–578 the composition is skewed to acidic residues; the sequence is DDPDFESDES. A phosphoserine mark is found at Ser-575 and Ser-594. Thr-597 is subject to Phosphothreonine. A compositionally biased stretch (basic and acidic residues) spans 632 to 649; it reads MGPKESSDEDRDSKLPSK. Phosphoserine occurs at positions 637, 638, and 644. Residues 652-690 form an interaction with CDKN2A region; that stretch reads KKKKKKSKEEEEKTTKKKSKHKKSKDKEEGKEDRKKKRK. Basic residues predominate over residues 666-675; the sequence is TKKKSKHKKS. Residues 707–725 are compositionally biased toward gly residues; it reads LGGGAPGSRHPGGGDYEEL.

It belongs to the small GTPase superfamily. Rab family.

It localises to the nucleus. The protein localises to the cytoplasm. Its function is as follows. May enhance cellular proliferation. May reduce growth inhibitory activity of CDKN2A. The sequence is that of Rab-like protein 6 (Rabl6) from Mus musculus (Mouse).